The primary structure comprises 505 residues: L-carnitine/gamma-butyrobetaine antiporter (505 aa).

The next 12 helical transmembrane spans lie at 10–30 (IEPK…WLTV), 51–71 (WGWA…WLVF), 92–112 (IFMM…SIEI), 143–163 (GPLP…FFFV), 195–215 (FYLV…TPLV), 231–251 (LDAI…ACGL), 263–283 (SYLS…SFIM), 316–336 (WTVF…IFLA), 347–367 (LCFG…TVLG), 403–423 (LSTA…VTLI), 446–466 (LLVR…LLAL), and 475–495 (AIIA…LSFI).

This sequence belongs to the BCCT transporter (TC 2.A.15) family. CaiT subfamily. In terms of assembly, homotrimer.

The protein resides in the cell inner membrane. It carries out the reaction 4-(trimethylamino)butanoate(in) + (R)-carnitine(out) = 4-(trimethylamino)butanoate(out) + (R)-carnitine(in). It functions in the pathway amine and polyamine metabolism; carnitine metabolism. Catalyzes the exchange of L-carnitine for gamma-butyrobetaine. The chain is L-carnitine/gamma-butyrobetaine antiporter from Salmonella paratyphi A (strain ATCC 9150 / SARB42).